A 241-amino-acid chain; its full sequence is Large ribosomal subunit protein uL1 (241 aa).

This sequence belongs to the universal ribosomal protein uL1 family. Part of the 50S ribosomal subunit.

Binds directly to 23S rRNA. The L1 stalk is quite mobile in the ribosome, and is involved in E site tRNA release. In terms of biological role, protein L1 is also a translational repressor protein, it controls the translation of the L11 operon by binding to its mRNA. This chain is Large ribosomal subunit protein uL1, found in Thermomicrobium roseum (strain ATCC 27502 / DSM 5159 / P-2).